We begin with the raw amino-acid sequence, 509 residues long: MSSHIQIFDTTLRDGEQTPGVNFTFDERLRIALQLEKWGVDVIEAGFPASSTGSFKSVQAIAQTLTTTAVCGLARCKKSDIDAVYEATKDAAKPVVHVFIATSPIHLEHKLKMSQEDVLASIKEHVTYAKQLFDVVQFSPEDATRTELPFLVKCVQTAVDAGATVINIPDTVGYSYHDEYAHIFKTLTESATSSNEIIYSAHCHDDLGMAVSNSLAAIEGGARRIEGTVNGIGERAGNAALEEVALALYVRNDHYGAQTALNLEETKKTSDLISRYAGIRVPRNKAIVGQNAFSHESGIHQDGVLKHRETYEIMTPQLVGVSMTELPLGKLSGKHAFSEKLKALGYDIDKEAQIDLFKQFKAIADKKKSVSDRDIHAIIQGSEHEHQALYKLETLQLQYVSSGLQSAVVVVKDKEGHIYQDSSIGTGSIVAIYNAVDRIFQKETELIDYRINSVTEGTDAQAEVHVNLLIEGKTVNGFGIDHDILQASCKAYVEAHAKFAAENVEKVGN.

The Pyruvate carboxyltransferase domain maps to 5–267 (IQIFDTTLRD…QTALNLEETK (263 aa)). Aspartate 14, histidine 202, histidine 204, and asparagine 238 together coordinate Mn(2+). The regulatory domain stretch occupies residues 391-509 (KLETLQLQYV…AAENVEKVGN (119 aa)).

Belongs to the alpha-IPM synthase/homocitrate synthase family. LeuA type 1 subfamily. As to quaternary structure, homodimer. It depends on Mn(2+) as a cofactor.

Its subcellular location is the cytoplasm. The enzyme catalyses 3-methyl-2-oxobutanoate + acetyl-CoA + H2O = (2S)-2-isopropylmalate + CoA + H(+). Its pathway is amino-acid biosynthesis; L-leucine biosynthesis; L-leucine from 3-methyl-2-oxobutanoate: step 1/4. Catalyzes the condensation of the acetyl group of acetyl-CoA with 3-methyl-2-oxobutanoate (2-ketoisovalerate) to form 3-carboxy-3-hydroxy-4-methylpentanoate (2-isopropylmalate). The sequence is that of 2-isopropylmalate synthase from Staphylococcus aureus (strain bovine RF122 / ET3-1).